Reading from the N-terminus, the 452-residue chain is Phosphoglucosamine mutase (452 aa).

The active-site Phosphoserine intermediate is Ser109. The Mg(2+) site is built by Ser109, Asp248, Asp250, and Asp252. Ser109 is subject to Phosphoserine.

It belongs to the phosphohexose mutase family. The cofactor is Mg(2+). Activated by phosphorylation.

The catalysed reaction is alpha-D-glucosamine 1-phosphate = D-glucosamine 6-phosphate. In terms of biological role, catalyzes the conversion of glucosamine-6-phosphate to glucosamine-1-phosphate. The protein is Phosphoglucosamine mutase of Erythrobacter litoralis (strain HTCC2594).